A 138-amino-acid polypeptide reads, in one-letter code: Large ribosomal subunit protein bL17 (138 aa).

Belongs to the bacterial ribosomal protein bL17 family. Part of the 50S ribosomal subunit. Contacts protein L32.

This Phenylobacterium zucineum (strain HLK1) protein is Large ribosomal subunit protein bL17.